We begin with the raw amino-acid sequence, 514 residues long: Glucose-6-phosphate 1-dehydrogenase 2 (514 aa).

Positions 69 and 176 each coordinate NADP(+). Residues histidine 206, lysine 210, glutamate 244, and aspartate 263 each contribute to the substrate site. Histidine 268 (proton acceptor) is an active-site residue. Lysine 366 lines the substrate pocket.

It belongs to the glucose-6-phosphate dehydrogenase family.

It catalyses the reaction D-glucose 6-phosphate + NADP(+) = 6-phospho-D-glucono-1,5-lactone + NADPH + H(+). Its pathway is carbohydrate degradation; pentose phosphate pathway; D-ribulose 5-phosphate from D-glucose 6-phosphate (oxidative stage): step 1/3. Its function is as follows. Catalyzes the oxidation of glucose 6-phosphate to 6-phosphogluconolactone. This Mycobacterium bovis (strain ATCC BAA-935 / AF2122/97) protein is Glucose-6-phosphate 1-dehydrogenase 2.